A 502-amino-acid polypeptide reads, in one-letter code: D-alanine--D-alanyl carrier protein ligase (502 aa).

150 to 151 (TS) serves as a coordination point for ATP. Aspartate 195 is a binding site for D-alanine. 290-295 (NTYGPT) contributes to the ATP binding site. Position 299 (valine 299) interacts with D-alanine. Aspartate 381 and lysine 490 together coordinate ATP. Lysine 490 provides a ligand contact to D-alanine.

The protein belongs to the ATP-dependent AMP-binding enzyme family. DltA subfamily.

The protein resides in the cytoplasm. The enzyme catalyses holo-[D-alanyl-carrier protein] + D-alanine + ATP = D-alanyl-[D-alanyl-carrier protein] + AMP + diphosphate. It participates in cell wall biogenesis; lipoteichoic acid biosynthesis. In terms of biological role, catalyzes the first step in the D-alanylation of lipoteichoic acid (LTA), the activation of D-alanine and its transfer onto the D-alanyl carrier protein (Dcp) DltC. In an ATP-dependent two-step reaction, forms a high energy D-alanyl-AMP intermediate, followed by transfer of the D-alanyl residue as a thiol ester to the phosphopantheinyl prosthetic group of the Dcp. D-alanylation of LTA plays an important role in modulating the properties of the cell wall in Gram-positive bacteria, influencing the net charge of the cell wall. The polypeptide is D-alanine--D-alanyl carrier protein ligase (Bacillus licheniformis (strain ATCC 14580 / DSM 13 / JCM 2505 / CCUG 7422 / NBRC 12200 / NCIMB 9375 / NCTC 10341 / NRRL NRS-1264 / Gibson 46)).